A 614-amino-acid chain; its full sequence is Phosphomethylpyrimidine synthase (614 aa).

Residues Asn226, Met255, Tyr284, His320, 340 to 342, 381 to 384, and Glu420 contribute to the substrate site; these read SRG and DGLR. Residue His424 participates in Zn(2+) binding. Tyr447 provides a ligand contact to substrate. His488 lines the Zn(2+) pocket. [4Fe-4S] cluster-binding residues include Cys568, Cys571, and Cys576.

The protein belongs to the ThiC family. Homodimer. It depends on [4Fe-4S] cluster as a cofactor.

The catalysed reaction is 5-amino-1-(5-phospho-beta-D-ribosyl)imidazole + S-adenosyl-L-methionine = 4-amino-2-methyl-5-(phosphooxymethyl)pyrimidine + CO + 5'-deoxyadenosine + formate + L-methionine + 3 H(+). It functions in the pathway cofactor biosynthesis; thiamine diphosphate biosynthesis. In terms of biological role, catalyzes the synthesis of the hydroxymethylpyrimidine phosphate (HMP-P) moiety of thiamine from aminoimidazole ribotide (AIR) in a radical S-adenosyl-L-methionine (SAM)-dependent reaction. The protein is Phosphomethylpyrimidine synthase of Acidovorax ebreus (strain TPSY) (Diaphorobacter sp. (strain TPSY)).